We begin with the raw amino-acid sequence, 105 residues long: Iron-sulfur cluster assembly protein CyaY (105 aa).

This sequence belongs to the frataxin family.

Its function is as follows. Involved in iron-sulfur (Fe-S) cluster assembly. May act as a regulator of Fe-S biogenesis. In Dechloromonas aromatica (strain RCB), this protein is Iron-sulfur cluster assembly protein CyaY.